The chain runs to 298 residues: Small ribosomal subunit protein uS2 (298 aa).

Belongs to the universal ribosomal protein uS2 family.

In Leifsonia xyli subsp. xyli (strain CTCB07), this protein is Small ribosomal subunit protein uS2.